The primary structure comprises 1759 residues: Histone-lysine N-methyltransferase ASHH2 (1759 aa).

Composition is skewed to basic and acidic residues over residues 154 to 165, 197 to 206, and 215 to 224; these read QEKEAPQAKEDE, ETTKHIKPDE, and RFDDGGKEGR. Disordered regions lie at residues 154–181, 197–237, 437–482, 515–556, and 738–816; these read QEKE…GIDT, ETTK…GSSD, CEAG…IESI, SNNI…NRNI, and DELR…VGRI. Over residues 462 to 472 the composition is skewed to basic residues; the sequence is SARHLRKSSRK. A compositionally biased stretch (polar residues) spans 530–556; that stretch reads RSQGNLNNGEHNRSSHNGNVEGSNRNI. A compositionally biased stretch (basic residues) spans 758-775; the sequence is KKAKHPKSKSNGTKKGKS. Composition is skewed to basic and acidic residues over residues 776 to 797 and 804 to 816; these read KFSE…EQRK and GRDD…VGRI. Residues 859 to 912 form a CW-type zinc finger; it reads YSTESAWVRCDDCFKWRRIPASVVGSIDESSRWICMNNSDKRFADCSKSQEMSN. Residues cysteine 868, cysteine 871, cysteine 893, and cysteine 904 each coordinate Zn(2+). One can recognise an AWS domain in the interval 974-1024; sequence DEIMVCHCKPSPDGRLGCGEECLNRMLNIECLQGTCPAGDLCSNQQFQKRK. The 118-residue stretch at 1026-1143 folds into the SET domain; sequence VKFERFQSGK…KGQELTFDYN (118 aa). Tyrosine 1142 contributes to the S-adenosyl-L-methionine binding site. Positions 1151–1167 constitute a Post-SET domain; sequence AAKKCYCGSSHCRGYIG. Disordered regions lie at residues 1225-1253, 1271-1345, 1496-1606, and 1727-1759; these read GYKD…PPPL, AVQQ…PGVN, ERSE…FSSP, and KQSV…KLNS. Residues 1232–1241 are compositionally biased toward polar residues; it reads DNTQTQSSVS. Residues 1284-1293 show a composition bias toward low complexity; that stretch reads STSPTSSSLS. Residues 1304–1316 are compositionally biased toward basic and acidic residues; the sequence is KTTKHGSGEDKKI. Positions 1317 to 1326 are enriched in basic residues; that stretch reads LPRPRPRMKT. The span at 1511–1521 shows a compositional bias: basic and acidic residues; sequence ASQEPRYDHQS. The segment covering 1530–1556 has biased composition (polar residues); sequence SVTSSKAATPETASVSEGYSEPNSGLP. Basic and acidic residues predominate over residues 1566 to 1577; it reads RWDQPSKTKEQR. Over residues 1581 to 1594 the composition is skewed to polar residues; that stretch reads ILSQQTDETNGNQD.

Belongs to the class V-like SAM-binding methyltransferase superfamily. Histone-lysine methyltransferase family. SET2 subfamily. As to quaternary structure, interacts with FRI and SUF4, two components of the transcription activator complex FRI-C, and with SWC6, a component of the SWR1 chromatin-remodeling complex. Interacts with BZR2/BES1 and IWS1. As to expression, ubiquitous, with higher levels in young tissues, including shoot and root apex. Expressed in ovules, tapetum layer and microspores.

The protein resides in the nucleus. The protein localises to the chromosome. It is found in the centromere. The catalysed reaction is N(6)-methyl-L-lysyl(36)-[histone H3] + S-adenosyl-L-methionine = N(6),N(6)-dimethyl-L-lysyl(36)-[histone H3] + S-adenosyl-L-homocysteine + H(+). It carries out the reaction N(6),N(6)-dimethyl-L-lysyl(36)-[histone H3] + S-adenosyl-L-methionine = N(6),N(6),N(6)-trimethyl-L-lysyl(36)-[histone H3] + S-adenosyl-L-homocysteine + H(+). Histone methyltransferase involved in di and tri-methylation of 'Lys-36' of histone H3 (H3K36me2 and H3K36me3). Binds to H3 already mono- or di-methylated on 'Lys-4'(H3K4me1 or H3K4me2), but not to H3K4me3. H3K4me and H3K36me represent specific tags for epigenetic transcriptional activation. Positively regulates FLC transcription to prevent early flowering transition. Required for flowering transition in response to vernalization and for the maintenance of FLC expression in late embryos, but dispensable for the initial reactivation in early embryos during reprogramming. Also seems to modulate several traits including floral organ size, root size and dormancy. Promotes apical dominance. Directly involved in the tri-methylation of 'Lys-36' of histone H3 (H3K36me3) at LAZ5 chromatin to maintain a transcriptionally active state of LAZ5, a TIR-NB-LRR protein involved in innate immunity. Required for brassinosteroid (BR)-induced gene expression and histone H3 trimethylation on 'Lys-36' (H3K36me3) in BR-regulated genes. The sequence is that of Histone-lysine N-methyltransferase ASHH2 from Arabidopsis thaliana (Mouse-ear cress).